Consider the following 323-residue polypeptide: NADH-cytochrome b5 reductase 2 (323 aa).

Residues Leu-30–Leu-46 form a helical membrane-spanning segment. An FAD-binding FR-type domain is found at Gln-72–Glu-177. Residue Lys-180–Leu-215 participates in FAD binding.

Belongs to the flavoprotein pyridine nucleotide cytochrome reductase family. FAD is required as a cofactor.

It localises to the mitochondrion outer membrane. It carries out the reaction 2 Fe(III)-[cytochrome b5] + NADH = 2 Fe(II)-[cytochrome b5] + NAD(+) + H(+). In terms of biological role, may mediate the reduction of outer membrane cytochrome b5. In Aspergillus oryzae (strain ATCC 42149 / RIB 40) (Yellow koji mold), this protein is NADH-cytochrome b5 reductase 2 (mcr1).